Reading from the N-terminus, the 178-residue chain is Neuroblastoma suppressor of tumorigenicity 1 (178 aa).

An N-terminal signal peptide occupies residues 1–16; it reads MLWVLVGAVLPVMLLA. 5 disulfide bridges follow: Cys-34–Cys-84, Cys-48–Cys-98, Cys-58–Cys-117, Cys-62–Cys-119, and Cys-81–Cys-122. Residues 34-123 form the CTCK domain; that stretch reads CEAKNITQIV…IVHCSCQACG (90 aa). The interval 132 to 178 is disordered; the sequence is NVYVQGEDSPGSQPGPHSHAHPHPGGQTPEPEEPPGAPQVEEEGAED. Residues 140 to 160 show a composition bias toward low complexity; it reads SPGSQPGPHSHAHPHPGGQTP.

This sequence belongs to the DAN family. In terms of assembly, homodimer.

It localises to the secreted. In terms of biological role, possible candidate as a tumor suppressor gene of neuroblastoma. May play an important role in preventing cells from entering the final stage (G1/S) of the transformation process. The chain is Neuroblastoma suppressor of tumorigenicity 1 (Nbl1) from Mus musculus (Mouse).